The primary structure comprises 95 residues: Large ribosomal subunit protein bL21 (95 aa).

This sequence belongs to the bacterial ribosomal protein bL21 family. As to quaternary structure, part of the 50S ribosomal subunit. Contacts protein L20.

This protein binds to 23S rRNA in the presence of protein L20. This chain is Large ribosomal subunit protein bL21, found in Rubrobacter xylanophilus (strain DSM 9941 / JCM 11954 / NBRC 16129 / PRD-1).